The chain runs to 208 residues: Outer-membrane lipoprotein carrier protein (208 aa).

A signal peptide spans 1 to 21; that stretch reads MRLIRTLFVAALAMGASLAHA.

This sequence belongs to the LolA family. Monomer.

The protein localises to the periplasm. Its function is as follows. Participates in the translocation of lipoproteins from the inner membrane to the outer membrane. Only forms a complex with a lipoprotein if the residue after the N-terminal Cys is not an aspartate (The Asp acts as a targeting signal to indicate that the lipoprotein should stay in the inner membrane). This chain is Outer-membrane lipoprotein carrier protein, found in Pseudomonas aeruginosa (strain UCBPP-PA14).